The chain runs to 426 residues: Transcriptional enhancer factor TEF-1 (426 aa).

M1 carries the N-acetylmethionine modification. The segment covering 1-12 (MEPSSWSGSESP) has biased composition (polar residues). A disordered region spans residues 1-31 (MEPSSWSGSESPAENMERMSDSADKPIDNDA). S11 bears the Phosphoserine mark. Basic and acidic residues predominate over residues 15–28 (NMERMSDSADKPID). The TEA DNA-binding region spans 28–104 (DNDAEGVWSP…QVLARRKSRD (77 aa)). The residue at position 108 (K108) is an N6-lactoyllysine. Residues 167–426 (GSSQDVKPFV…QHHIYRLVKD (260 aa)) form a transcriptional activation region.

In terms of assembly, interacts with YAP1 and WWTR1/TAZ. In terms of processing, lactylation by AARS1 promotes nuclear localization and stabilization of YAP1, leading to increased Hippo signaling pathway. Delactylated by SIRT1. In terms of tissue distribution, preferentially expressed in skeletal muscle. Lower levels in pancreas, placenta, and heart.

The protein resides in the nucleus. Functionally, transcription factor which plays a key role in the Hippo signaling pathway, a pathway involved in organ size control and tumor suppression by restricting proliferation and promoting apoptosis. The core of this pathway is composed of a kinase cascade wherein MST1/MST2, in complex with its regulatory protein SAV1, phosphorylates and activates LATS1/2 in complex with its regulatory protein MOB1, which in turn phosphorylates and inactivates YAP1 oncoprotein and WWTR1/TAZ. Acts by mediating gene expression of YAP1 and WWTR1/TAZ, thereby regulating cell proliferation, migration and epithelial mesenchymal transition (EMT) induction. Binds specifically and cooperatively to the SPH and GT-IIC 'enhansons' (5'-GTGGAATGT-3') and activates transcription in vivo in a cell-specific manner. The activation function appears to be mediated by a limiting cell-specific transcriptional intermediary factor (TIF). Involved in cardiac development. Binds to the M-CAT motif. The protein is Transcriptional enhancer factor TEF-1 (TEAD1) of Homo sapiens (Human).